A 417-amino-acid chain; its full sequence is Protein translocase subunit SecD (417 aa).

The next 6 helical transmembrane spans lie at 9 to 29 (LLVS…PLVS), 236 to 256 (ASMK…LLYY), 258 to 278 (LSGL…LAVM), 288 to 308 (PGMA…VLIF), 333 to 353 (FTTI…LFYL), and 360 to 380 (GFAV…VTVT).

The protein belongs to the SecD/SecF family. SecD subfamily. Forms a complex with SecF. Part of the essential Sec protein translocation apparatus which comprises SecA, SecYEG and auxiliary proteins SecDF. Other proteins may also be involved.

It is found in the cell membrane. Its function is as follows. Part of the Sec protein translocase complex. Interacts with the SecYEG preprotein conducting channel. SecDF uses the proton motive force (PMF) to complete protein translocation after the ATP-dependent function of SecA. The sequence is that of Protein translocase subunit SecD from Acidaminococcus fermentans (strain ATCC 25085 / DSM 20731 / CCUG 9996 / CIP 106432 / VR4).